Consider the following 419-residue polypeptide: Adenylosuccinate synthetase (419 aa).

Residues 15 to 21 (GDEGKGK) and 43 to 45 (GHT) each bind GTP. The Proton acceptor role is filled by aspartate 16. Residues aspartate 16 and glycine 43 each contribute to the Mg(2+) site. Residues 16 to 19 (DEGK), 41 to 44 (NAGH), threonine 128, arginine 142, glutamine 223, threonine 238, and arginine 302 contribute to the IMP site. Histidine 44 serves as the catalytic Proton donor. 298-304 (TTTGRAR) lines the substrate pocket. GTP-binding positions include arginine 304, 330 to 332 (KLD), and 408 to 410 (STS).

The protein belongs to the adenylosuccinate synthetase family. In terms of assembly, homodimer. The cofactor is Mg(2+).

Its subcellular location is the cytoplasm. It catalyses the reaction IMP + L-aspartate + GTP = N(6)-(1,2-dicarboxyethyl)-AMP + GDP + phosphate + 2 H(+). Its pathway is purine metabolism; AMP biosynthesis via de novo pathway; AMP from IMP: step 1/2. Functionally, plays an important role in the de novo pathway of purine nucleotide biosynthesis. Catalyzes the first committed step in the biosynthesis of AMP from IMP. The chain is Adenylosuccinate synthetase from Sulfurimonas denitrificans (strain ATCC 33889 / DSM 1251) (Thiomicrospira denitrificans (strain ATCC 33889 / DSM 1251)).